A 588-amino-acid polypeptide reads, in one-letter code: Aspartate--tRNA ligase (588 aa).

Residue E177 coordinates L-aspartate. An aspartate region spans residues 201–204; that stretch reads QLFK. R223 is an L-aspartate binding site. ATP-binding positions include 223-225 and Q232; that span reads RDE. H451 lines the L-aspartate pocket. Position 485 (E485) interacts with ATP. R492 lines the L-aspartate pocket. 537-540 contacts ATP; it reads GLDR.

The protein belongs to the class-II aminoacyl-tRNA synthetase family. Type 1 subfamily. In terms of assembly, homodimer.

The protein localises to the cytoplasm. The enzyme catalyses tRNA(Asp) + L-aspartate + ATP = L-aspartyl-tRNA(Asp) + AMP + diphosphate. Its function is as follows. Catalyzes the attachment of L-aspartate to tRNA(Asp) in a two-step reaction: L-aspartate is first activated by ATP to form Asp-AMP and then transferred to the acceptor end of tRNA(Asp). The sequence is that of Aspartate--tRNA ligase from Staphylococcus carnosus (strain TM300).